Here is a 362-residue protein sequence, read N- to C-terminus: Phosphoserine aminotransferase (362 aa).

Arg-43 provides a ligand contact to L-glutamate. Pyridoxal 5'-phosphate is bound by residues Ala-77 to Arg-78, Trp-103, Thr-153, Asp-173, and Gln-196. An N6-(pyridoxal phosphate)lysine modification is found at Lys-197.

Belongs to the class-V pyridoxal-phosphate-dependent aminotransferase family. SerC subfamily. Homodimer. Pyridoxal 5'-phosphate serves as cofactor.

Its subcellular location is the cytoplasm. The catalysed reaction is O-phospho-L-serine + 2-oxoglutarate = 3-phosphooxypyruvate + L-glutamate. It carries out the reaction 4-(phosphooxy)-L-threonine + 2-oxoglutarate = (R)-3-hydroxy-2-oxo-4-phosphooxybutanoate + L-glutamate. It functions in the pathway amino-acid biosynthesis; L-serine biosynthesis; L-serine from 3-phospho-D-glycerate: step 2/3. The protein operates within cofactor biosynthesis; pyridoxine 5'-phosphate biosynthesis; pyridoxine 5'-phosphate from D-erythrose 4-phosphate: step 3/5. Functionally, catalyzes the reversible conversion of 3-phosphohydroxypyruvate to phosphoserine and of 3-hydroxy-2-oxo-4-phosphonooxybutanoate to phosphohydroxythreonine. The sequence is that of Phosphoserine aminotransferase from Legionella pneumophila subsp. pneumophila (strain Philadelphia 1 / ATCC 33152 / DSM 7513).